The primary structure comprises 209 residues: dITP/XTP pyrophosphatase (209 aa).

Substrate is bound at residue 7-12; the sequence is TGNKGK. The Proton acceptor role is filled by D73. D73 contributes to the Mg(2+) binding site. Substrate contacts are provided by residues S74, 155-158, K178, and 183-184; these read FGYD and HR.

The protein belongs to the HAM1 NTPase family. As to quaternary structure, homodimer. The cofactor is Mg(2+).

It carries out the reaction XTP + H2O = XMP + diphosphate + H(+). It catalyses the reaction dITP + H2O = dIMP + diphosphate + H(+). The catalysed reaction is ITP + H2O = IMP + diphosphate + H(+). Pyrophosphatase that catalyzes the hydrolysis of nucleoside triphosphates to their monophosphate derivatives, with a high preference for the non-canonical purine nucleotides XTP (xanthosine triphosphate), dITP (deoxyinosine triphosphate) and ITP. Seems to function as a house-cleaning enzyme that removes non-canonical purine nucleotides from the nucleotide pool, thus preventing their incorporation into DNA/RNA and avoiding chromosomal lesions. The protein is dITP/XTP pyrophosphatase of Sulfurovum sp. (strain NBC37-1).